The primary structure comprises 154 residues: Endoribonuclease YbeY (154 aa).

Zn(2+) contacts are provided by histidine 114, histidine 118, and histidine 124.

This sequence belongs to the endoribonuclease YbeY family. Zn(2+) serves as cofactor.

It is found in the cytoplasm. In terms of biological role, single strand-specific metallo-endoribonuclease involved in late-stage 70S ribosome quality control and in maturation of the 3' terminus of the 16S rRNA. The protein is Endoribonuclease YbeY of Histophilus somni (strain 2336) (Haemophilus somnus).